Consider the following 403-residue polypeptide: Argininosuccinate synthase (403 aa).

ATP is bound by residues 10 to 18 and Ala-37; that span reads AYSGGLDTS. Tyr-89 serves as a coordination point for L-citrulline. An ATP-binding site is contributed by Gly-119. Thr-121, Asn-125, and Asp-126 together coordinate L-aspartate. L-citrulline is bound at residue Asn-125. The L-citrulline site is built by Arg-129, Ser-178, Ser-187, Glu-263, and Tyr-275.

This sequence belongs to the argininosuccinate synthase family. Type 1 subfamily. As to quaternary structure, homotetramer.

The protein resides in the cytoplasm. It catalyses the reaction L-citrulline + L-aspartate + ATP = 2-(N(omega)-L-arginino)succinate + AMP + diphosphate + H(+). Its pathway is amino-acid biosynthesis; L-arginine biosynthesis; L-arginine from L-ornithine and carbamoyl phosphate: step 2/3. The protein is Argininosuccinate synthase of Idiomarina loihiensis (strain ATCC BAA-735 / DSM 15497 / L2-TR).